Consider the following 340-residue polypeptide: 2-deoxy-scyllo-inosamine dehydrogenase (340 aa).

Residues Cys-37, His-59, Cys-89, Cys-92, Cys-95, Cys-103, and Glu-144 each contribute to the Zn(2+) site.

It belongs to the zinc-containing alcohol dehydrogenase family. DOIA dehydrogenase subfamily. The cofactor is Zn(2+).

The enzyme catalyses 2-deoxy-scyllo-inosamine + NADP(+) = 3-amino-2,3-dideoxy-scyllo-inosose + NADPH + H(+). It catalyses the reaction 2-deoxy-scyllo-inosamine + NAD(+) = 3-amino-2,3-dideoxy-scyllo-inosose + NADH + H(+). It functions in the pathway metabolic intermediate biosynthesis; 2-deoxystreptamine biosynthesis; 2-deoxystreptamine from D-glucose 6-phosphate: step 3/4. It participates in antibiotic biosynthesis; neomycin biosynthesis. In terms of biological role, catalyzes the oxidation of 2-deoxy-scyllo-inosamine (DOIA) with NAD(+) or NADP(+), forming 3-amino-2,3-dideoxy-scyllo-inosose (amino-DOI). The protein is 2-deoxy-scyllo-inosamine dehydrogenase (neoA) of Streptomyces fradiae (Streptomyces roseoflavus).